The sequence spans 101 residues: Small ribosomal subunit protein uS14 (101 aa).

The protein belongs to the universal ribosomal protein uS14 family. In terms of assembly, part of the 30S ribosomal subunit. Contacts proteins S3 and S10.

Its function is as follows. Binds 16S rRNA, required for the assembly of 30S particles and may also be responsible for determining the conformation of the 16S rRNA at the A site. This chain is Small ribosomal subunit protein uS14, found in Cellvibrio japonicus (strain Ueda107) (Pseudomonas fluorescens subsp. cellulosa).